We begin with the raw amino-acid sequence, 157 residues long: Dihydrofolate reductase type 6 (157 aa).

The DHFR domain occupies 2 to 156 (KISLMAAVSE…IDYTYQIWAK (155 aa)).

It belongs to the dihydrofolate reductase family. In terms of assembly, homodimer.

It catalyses the reaction (6S)-5,6,7,8-tetrahydrofolate + NADP(+) = 7,8-dihydrofolate + NADPH + H(+). It functions in the pathway cofactor biosynthesis; tetrahydrofolate biosynthesis; 5,6,7,8-tetrahydrofolate from 7,8-dihydrofolate: step 1/1. Key enzyme in folate metabolism. Catalyzes an essential reaction for de novo glycine and purine synthesis, and for DNA precursor synthesis. This Proteus mirabilis protein is Dihydrofolate reductase type 6 (dhfrVI).